The primary structure comprises 456 residues: Chromosomal replication initiator protein DnaA (456 aa).

Residues 1–85 (MDADLNKLWE…EIKFIIESDL (85 aa)) are domain I, interacts with DnaA modulators. The segment at 85–117 (LNNEDELNNSDNSDKNRDKNSRRNIVVNDEMSS) is domain II. Residues 118 to 334 (TLNPKYTFNS…GALIRIIAYS (217 aa)) form a domain III, AAA+ region region. 4 residues coordinate ATP: G162, G164, K165, and T166. Positions 335-456 (SLTNREVTVD…SDITKKVSQN (122 aa)) are domain IV, binds dsDNA.

It belongs to the DnaA family. In terms of assembly, oligomerizes as a right-handed, spiral filament on DNA at oriC.

The protein localises to the cytoplasm. Its function is as follows. Plays an essential role in the initiation and regulation of chromosomal replication. ATP-DnaA binds to the origin of replication (oriC) to initiate formation of the DNA replication initiation complex once per cell cycle. Binds the DnaA box (a 9 base pair repeat at the origin) and separates the double-stranded (ds)DNA. Forms a right-handed helical filament on oriC DNA; dsDNA binds to the exterior of the filament while single-stranded (ss)DNA is stabiized in the filament's interior. The ATP-DnaA-oriC complex binds and stabilizes one strand of the AT-rich DNA unwinding element (DUE), permitting loading of DNA polymerase. After initiation quickly degrades to an ADP-DnaA complex that is not apt for DNA replication. Binds acidic phospholipids. The protein is Chromosomal replication initiator protein DnaA of Clostridium botulinum (strain Eklund 17B / Type B).